Consider the following 88-residue polypeptide: Large ribosomal subunit protein bL31B (88 aa).

The protein belongs to the bacterial ribosomal protein bL31 family. Type B subfamily. In terms of assembly, part of the 50S ribosomal subunit.

The polypeptide is Large ribosomal subunit protein bL31B (Janthinobacterium sp. (strain Marseille) (Minibacterium massiliensis)).